We begin with the raw amino-acid sequence, 285 residues long: uncharacterized protein (285 aa).

One can recognise an HTH araC/xylS-type domain in the interval 184–282 (HSICNWVQDN…GLTPGEYSAR (99 aa)). 2 consecutive DNA-binding regions (H-T-H motif) follow at residues 201-222 (ESVA…AQHG) and 249-272 (IHEV…RRQF).

This is an uncharacterized protein from Escherichia coli (strain K12).